Reading from the N-terminus, the 508-residue chain is Amphoterin-induced protein 3 (508 aa).

An N-terminal signal peptide occupies residues 1–19 (MAWLVLSGILLCMLGAGLG). At 20-383 (TSDLEDVLPP…ARPEPETFNT (364 aa)) the chain is on the extracellular side. The 37-residue stretch at 25–61 (DVLPPAPHNCPDICICAADVLSCAGRGLQDLPVALPT) folds into the LRRNT domain. Intrachain disulfides connect cysteine 34/cysteine 40 and cysteine 38/cysteine 47. LRR repeat units lie at residues 62–83 (TAAE…WLAP), 86–107 (RLRA…AFTN), 110–133 (GLRT…DGLE), 134–155 (ELEK…AFQG), 158–178 (MLSH…NHLH), and 184–207 (RLRT…AALP). Asparagine 107 carries N-linked (GlcNAc...) asparagine glycosylation. Asparagine 142 is a glycosylation site (N-linked (GlcNAc...) asparagine). The LRRCT domain occupies 219–275 (NPLPCDCSLYHLLRRWHQRGLSALHDFEREYTCLVFKVSESRVRFFEHSRVFKNCSV). Intrachain disulfides connect cysteine 223–cysteine 251, cysteine 225–cysteine 273, and cysteine 300–cysteine 352. Asparagine 272, asparagine 301, asparagine 362, and asparagine 368 each carry an N-linked (GlcNAc...) asparagine glycan. The Ig-like C2-type domain occupies 279–370 (PGLELPEEQL…HNQTLEYNVS (92 aa)). A helical transmembrane segment spans residues 384 to 404 (GFTTLLGCIVGLVLVLLYLFA). Over 405–508 (PPCRGCCHCC…STGSEGLVMS (104 aa)) the chain is Cytoplasmic.

Belongs to the immunoglobulin superfamily. AMIGO family. As to quaternary structure, binds AMIGO1 or AMIGO2. As to expression, ubiquitous.

Its subcellular location is the membrane. Functionally, may mediate heterophilic cell-cell interaction. May contribute to signal transduction through its intracellular domain. The chain is Amphoterin-induced protein 3 from Mus musculus (Mouse).